We begin with the raw amino-acid sequence, 239 residues long: SkfA peptide export ATP-binding protein SkfE (239 aa).

An ABC transporter domain is found at 4 to 232; sequence MQVQNLSKCY…AEWRKEVIRL (229 aa). Position 36 to 43 (36 to 43) interacts with ATP; sequence GPNGAGKT.

The protein belongs to the ABC transporter superfamily. SkfA peptide export (TC 3.A.1.128.1) family.

It localises to the cell membrane. The enzyme catalyses sulfate(out) + ATP + H2O = sulfate(in) + ADP + phosphate + H(+). It carries out the reaction thiosulfate(out) + ATP + H2O = thiosulfate(in) + ADP + phosphate + H(+). Probably part of the ABC transporter SkfEF involved in the export of the bacteriocin SKF. Probably responsible for energy coupling to the transport system. This is SkfA peptide export ATP-binding protein SkfE from Bacillus subtilis (strain 168).